We begin with the raw amino-acid sequence, 367 residues long: MSSAALEVRLNHRFPGTEIDVCFAGRGCTVLFGPSGAGKSTIAMAVAGLMRPDHLHLRVGGLDLHDLPPERRRIGVVFQDARLFPHLSVLGNLEYGARRAPPGDFPLSGDFPLSREEIMTMLGIGALLKRRPATLSGGERQRVAIGRALLSRPHMLVMDEPLASLDQARKQDILPVLRRLKAAGLPMLYVTHALQEMAYLADDVVLLETGRVRASGSLGHISSDPALSGGFGHEAGAVLEAVVSGHMPDRGLTILSCAGTEVLVPLQALKPGTGLRVRIPAADVIVATESPGHISLHNILPVVMTDWQPAHLQGKAGTTQEALVRLALPGGHLLARVTRDAIQRLGLEPGRHVLALIKSVAVDVLGP.

The 234-residue stretch at 1–234 (MSSAALEVRL…PALSGGFGHE (234 aa)) folds into the ABC transporter domain. 33–40 (GPSGAGKS) provides a ligand contact to ATP. Positions 293-366 (HISLHNILPV…IKSVAVDVLG (74 aa)) constitute a Mop domain.

It belongs to the ABC transporter superfamily. Molybdate importer (TC 3.A.1.8) family. As to quaternary structure, the complex is composed of two ATP-binding proteins (ModC), two transmembrane proteins (ModB) and a solute-binding protein (ModA).

It localises to the cell inner membrane. It carries out the reaction molybdate(out) + ATP + H2O = molybdate(in) + ADP + phosphate + H(+). In terms of biological role, part of the ABC transporter complex ModABC involved in molybdenum import. Responsible for energy coupling to the transport system. This chain is Molybdenum import ATP-binding protein ModC, found in Granulibacter bethesdensis (strain ATCC BAA-1260 / CGDNIH1).